A 118-amino-acid chain; its full sequence is Small ribosomal subunit protein uS13 (118 aa).

The tract at residues 94-118 (GLPVRGQRTKTNARTRKGPRKPIKK) is disordered.

It belongs to the universal ribosomal protein uS13 family. As to quaternary structure, part of the 30S ribosomal subunit. Forms a loose heterodimer with protein S19. Forms two bridges to the 50S subunit in the 70S ribosome.

In terms of biological role, located at the top of the head of the 30S subunit, it contacts several helices of the 16S rRNA. In the 70S ribosome it contacts the 23S rRNA (bridge B1a) and protein L5 of the 50S subunit (bridge B1b), connecting the 2 subunits; these bridges are implicated in subunit movement. Contacts the tRNAs in the A and P-sites. The protein is Small ribosomal subunit protein uS13 of Salmonella paratyphi A (strain ATCC 9150 / SARB42).